Consider the following 630-residue polypeptide: Alpha-1,4-glucan:maltose-1-phosphate maltosyltransferase (630 aa).

Alpha-maltose 1-phosphate is bound by residues Arg-234, Gln-294, and Asp-329. Asp-365 acts as the Nucleophile in catalysis. Asn-366 is an alpha-maltose 1-phosphate binding site. Catalysis depends on Glu-394, which acts as the Proton donor. Lys-504–Tyr-505 lines the alpha-maltose 1-phosphate pocket.

This sequence belongs to the glycosyl hydrolase 13 family. GlgE subfamily. In terms of assembly, homodimer.

The catalysed reaction is alpha-maltose 1-phosphate + [(1-&gt;4)-alpha-D-glucosyl](n) = [(1-&gt;4)-alpha-D-glucosyl](n+2) + phosphate. Maltosyltransferase that uses maltose 1-phosphate (M1P) as the sugar donor to elongate linear or branched alpha-(1-&gt;4)-glucans. Is involved in a branched alpha-glucan biosynthetic pathway from trehalose, together with TreS, Mak and GlgB. In Picrophilus torridus (strain ATCC 700027 / DSM 9790 / JCM 10055 / NBRC 100828 / KAW 2/3), this protein is Alpha-1,4-glucan:maltose-1-phosphate maltosyltransferase.